A 126-amino-acid polypeptide reads, in one-letter code: Glycine cleavage system H protein (126 aa).

Positions 22-104 (VATIGITEYA…YEKAWMVKIE (83 aa)) constitute a Lipoyl-binding domain. N6-lipoyllysine is present on lysine 63.

Belongs to the GcvH family. The glycine cleavage system is composed of four proteins: P, T, L and H. Requires (R)-lipoate as cofactor.

In terms of biological role, the glycine cleavage system catalyzes the degradation of glycine. The H protein shuttles the methylamine group of glycine from the P protein to the T protein. Functionally, is also involved in protein lipoylation via its role as an octanoyl/lipoyl carrier protein intermediate. This chain is Glycine cleavage system H protein, found in Staphylococcus epidermidis (strain ATCC 35984 / DSM 28319 / BCRC 17069 / CCUG 31568 / BM 3577 / RP62A).